Reading from the N-terminus, the 545-residue chain is Alpha-galactosidase A (545 aa).

The signal sequence occupies residues 1–31 (MIQGLESIMNQGTKRILLAATLAATPWQVYG). A disulfide bond links Cys54 and Cys86. 4 N-linked (GlcNAc...) asparagine glycosylation sites follow: Asn57, Asn95, Asn101, and Asn131. An intrachain disulfide couples Cys134 to Cys164. The active-site Nucleophile is Asp162. N-linked (GlcNAc...) asparagine glycosylation is present at Asn211. Asp220 (proton donor) is an active-site residue. 2 N-linked (GlcNAc...) asparagine glycosylation sites follow: Asn363 and Asn444. Positions 421 to 518 (CSSVVPTGLV…KNAKTDGCLT (98 aa)) constitute a Ricin B-type lectin domain. 2 cysteine pairs are disulfide-bonded: Cys438/Cys452 and Cys477/Cys490.

Belongs to the glycosyl hydrolase 27 family. In terms of processing, a C-terminal Ser/Thr-rich region may provide possible sites for O-glycosylation.

The protein localises to the secreted. The enzyme catalyses Hydrolysis of terminal, non-reducing alpha-D-galactose residues in alpha-D-galactosides, including galactose oligosaccharides, galactomannans and galactolipids.. Its function is as follows. Hydrolyzes a variety of simple alpha-D-galactoside as well as more complex molecules such as oligosaccharides and polysaccharides. The chain is Alpha-galactosidase A (aglA) from Aspergillus niger.